Consider the following 570-residue polypeptide: GDP-Man:Man(3)GlcNAc(2)-PP-Dol alpha-1,2-mannosyltransferase (570 aa).

The Lumenal portion of the chain corresponds to 1 to 7 (MKLADFV). Residues 8–70 (TYVFGSLLAG…DFGWKNSSVR (63 aa)) form a helical membrane-spanning segment. Residues 71-200 (RAFILASERP…RLVESKSWPK (130 aa)) lie on the Cytoplasmic side of the membrane. The segment at residues 201–221 (FTLLGQAYGSIILSIEALTTL) is an intramembrane region (helical). Topologically, residues 222 to 446 (APDYWIDTMG…FGINAMWNEH (225 aa)) are cytoplasmic. Positions 447–467 (FGIAVVEYMASGLIPLCHASA) form an intramembrane region, helical. The Cytoplasmic segment spans residues 468–570 (GPLYDIVVPW…LNLTHNRMFS (103 aa)).

This sequence belongs to the glycosyltransferase group 1 family.

The protein resides in the endoplasmic reticulum membrane. The enzyme catalyses an alpha-D-Man-(1-&gt;3)-[alpha-D-Man-(1-&gt;6)]-beta-D-Man-(1-&gt;4)-beta-D-GlcNAc-(1-&gt;4)-alpha-D-GlcNAc-diphospho-di-trans,poly-cis-dolichol + 2 GDP-alpha-D-mannose = an alpha-D-Man-(1-&gt;2)-alpha-D-Man-(1-&gt;2)-alpha-D-Man-(1-&gt;3)-[alpha-D-Man-(1-&gt;6)]-beta-D-Man-(1-&gt;4)-beta-D-GlcNAc-(1-&gt;4)-alpha-D-GlcNAc-diphospho-di-trans,poly-cis-dolichol + 2 GDP + 2 H(+). The protein operates within protein modification; protein glycosylation. Functionally, GDP-Man:Man(3)GlcNAc(2)-PP-Dol alpha-1,2-mannosyltransferase that operates in the biosynthetic pathway of dolichol-linked oligosaccharides, the glycan precursors employed in protein asparagine (N)-glycosylation. The assembly of dolichol-linked oligosaccharides begins on the cytosolic side of the endoplasmic reticulum membrane and finishes in its lumen. The sequential addition of sugars to dolichol pyrophosphate produces dolichol-linked oligosaccharides containing fourteen sugars, including two GlcNAcs, nine mannoses and three glucoses. Once assembled, the oligosaccharide is transferred from the lipid to nascent proteins by oligosaccharyltransferases. Catalyzes, on the cytoplasmic face of the endoplasmic reticulum, the addition of the fourth and fifth mannose residues to the dolichol-linked oligosaccharide chain, to produce Man(5)GlcNAc(2)-PP-dolichol core oligosaccharide. This is GDP-Man:Man(3)GlcNAc(2)-PP-Dol alpha-1,2-mannosyltransferase (ALG11) from Kluyveromyces lactis (strain ATCC 8585 / CBS 2359 / DSM 70799 / NBRC 1267 / NRRL Y-1140 / WM37) (Yeast).